We begin with the raw amino-acid sequence, 146 residues long: 3-hydroxyacyl-[acyl-carrier-protein] dehydratase FabZ (146 aa).

Residue histidine 49 is part of the active site.

It belongs to the thioester dehydratase family. FabZ subfamily.

The protein resides in the cytoplasm. It catalyses the reaction a (3R)-hydroxyacyl-[ACP] = a (2E)-enoyl-[ACP] + H2O. Its function is as follows. Involved in unsaturated fatty acids biosynthesis. Catalyzes the dehydration of short chain beta-hydroxyacyl-ACPs and long chain saturated and unsaturated beta-hydroxyacyl-ACPs. The polypeptide is 3-hydroxyacyl-[acyl-carrier-protein] dehydratase FabZ (Pseudomonas putida (strain ATCC 700007 / DSM 6899 / JCM 31910 / BCRC 17059 / LMG 24140 / F1)).